We begin with the raw amino-acid sequence, 137 residues long: Small ribosomal subunit protein uS9 (137 aa).

Residues 105 to 137 (LKTEGYLKRDPRAVERKKYGLRKARKAPQYSKR) form a disordered region. A compositionally biased stretch (basic and acidic residues) spans 109–122 (GYLKRDPRAVERKK). A compositionally biased stretch (basic residues) spans 123–137 (YGLRKARKAPQYSKR).

Belongs to the universal ribosomal protein uS9 family.

This is Small ribosomal subunit protein uS9 from Synechococcus sp. (strain JA-3-3Ab) (Cyanobacteria bacterium Yellowstone A-Prime).